Reading from the N-terminus, the 432-residue chain is Probable M18 family aminopeptidase 2 (432 aa).

3 residues coordinate Zn(2+): His-86, His-157, and His-408.

It belongs to the peptidase M18 family. Zn(2+) serves as cofactor.

The polypeptide is Probable M18 family aminopeptidase 2 (Streptomyces avermitilis (strain ATCC 31267 / DSM 46492 / JCM 5070 / NBRC 14893 / NCIMB 12804 / NRRL 8165 / MA-4680)).